We begin with the raw amino-acid sequence, 666 residues long: DNA ligase (666 aa).

NAD(+) is bound by residues D34–D38, S83–L84, and E114. K116 functions as the N6-AMP-lysine intermediate in the catalytic mechanism. R137, E171, K286, and K310 together coordinate NAD(+). Zn(2+)-binding residues include C404, C407, C422, and C427. Positions N588–E666 constitute a BRCT domain.

Belongs to the NAD-dependent DNA ligase family. LigA subfamily. The cofactor is Mg(2+). Mn(2+) serves as cofactor.

The catalysed reaction is NAD(+) + (deoxyribonucleotide)n-3'-hydroxyl + 5'-phospho-(deoxyribonucleotide)m = (deoxyribonucleotide)n+m + AMP + beta-nicotinamide D-nucleotide.. Functionally, DNA ligase that catalyzes the formation of phosphodiester linkages between 5'-phosphoryl and 3'-hydroxyl groups in double-stranded DNA using NAD as a coenzyme and as the energy source for the reaction. It is essential for DNA replication and repair of damaged DNA. This is DNA ligase from Mesoplasma florum (strain ATCC 33453 / NBRC 100688 / NCTC 11704 / L1) (Acholeplasma florum).